Reading from the N-terminus, the 378-residue chain is Tafazzin (378 aa).

The Mitochondrial intermembrane portion of the chain corresponds to 1–137 (MFMVVCSNLR…RLRNPSKFWY (137 aa)). A disordered region spans residues 46–112 (APEARPVPDE…DQDADPSLDV (67 aa)). A compositionally biased stretch (basic and acidic residues) spans 51–67 (PVPDERYPGSQQDRKDI). Residues 138-158 (VVSQFVVSAVGIFSKVVLMFL) lie within the membrane without spanning it. The Mitochondrial intermembrane portion of the chain corresponds to 159–378 (NKPRVYNRER…ETEKLHRERN (220 aa)). The HXXXXD motif motif lies at 188–193 (HYSCFD).

This sequence belongs to the taffazin family. As to quaternary structure, associates with multiple protein complexes. Association with large protein complexes occurs only in the presence of cardiolipin.

It localises to the mitochondrion outer membrane. Its subcellular location is the mitochondrion inner membrane. The protein localises to the mitochondrion. It is found in the mitochondrion membrane. The protein resides in the golgi apparatus membrane. It localises to the endoplasmic reticulum membrane. It carries out the reaction 1'-[1,2-diacyl-sn-glycero-3-phospho],3'-[1-acyl-sn-glycero-3-phospho]-glycerol + a 1,2-diacyl-sn-glycero-3-phosphocholine = a cardiolipin + a 1-acyl-sn-glycero-3-phosphocholine. The catalysed reaction is 1'-[1,2-di-(9Z,12Z-octadecadienoyl)-sn-glycero-3-phospho]-3'-[1-(9Z,12Z-octadecadienoyl)-sn-glycero-3-phospho]-glycerol + 1-hexadecanoyl-2-(9Z,12Z-octadecadienoyl)-sn-glycero-3-phosphocholine = 1',3'-bis-[1,2-di-(9Z,12Z-octadecadienoyl)-sn-glycero-3-phospho]-glycerol + 1-hexadecanoyl-sn-glycero-3-phosphocholine. The enzyme catalyses 1'-[1,2-di-(9Z,12Z-octadecadienoyl)-sn-glycero-3-phospho]-3'-[2-(9Z,12Z-octadecadienoyl)-sn-glycero-3-phospho]-glycerol + 1-hexadecanoyl-2-(9Z,12Z-octadecadienoyl)-sn-glycero-3-phosphocholine = 1',3'-bis-[1,2-di-(9Z,12Z-octadecadienoyl)-sn-glycero-3-phospho]-glycerol + 1-hexadecanoyl-sn-glycero-3-phosphocholine. It catalyses the reaction 1,2-di-(9Z,12Z-octadecadienoyl)-sn-glycero-3-phosphocholine + 1'-[1,2-di-(9Z,12Z-octadecadienoyl)-sn-glycero-3-phospho]-3'-[1-(9Z,12Z-octadecadienoyl)-sn-glycero-3-phospho]-glycerol = 1-(9Z,12Z)-octadecadienoyl-sn-glycero-3-phosphocholine + 1',3'-bis-[1,2-di-(9Z,12Z-octadecadienoyl)-sn-glycero-3-phospho]-glycerol. It carries out the reaction 1-tetradecanoyl-sn-glycero-3-phosphocholine + 1',3'-bis-[1,2-di-(9Z,12Z-octadecadienoyl)-sn-glycero-3-phospho]-glycerol = 1-tetradecanoyl-2-(9Z,12Z-octadecadienoyl)-sn-glycero-3-phosphocholine + 1'-[1,2-di-(9Z,12Z-octadecadienoyl)-sn-glycero-3-phospho]-3'-[1-(9Z,12Z-octadecadienoyl)-sn-glycero-3-phospho]-glycerol. The catalysed reaction is 1',3'-bis[1,2-di-(9Z-octadecenoyl)-sn-glycero-3-phospho]-glycerol + 1-nonadecanoyl-sn-glycero-3-phosphocholine = 1-nonadecanoyl-2-(9Z-octadecenoyl)-sn-glycero-3-phosphocholine + 1'-[1,2-di-(9Z-octadecenoyl)-sn-glycero-3-phospho]-3'-[1-(9Z-octadecenoyl)-sn-glycero-3-phospho]-glycerol. The enzyme catalyses a 1,2-diacyl-sn-glycero-3-phospho-(1'-sn-glycerol) + a 1-acyl-sn-glycero-3-phosphocholine = 1-acyl-sn-glycero-3-phospho-(1'-sn-glycerol) + a 1,2-diacyl-sn-glycero-3-phosphocholine. It catalyses the reaction 1-hexadecanoyl-2-(9Z,12Z-octadecadienoyl)-sn-glycero-3-phospho-(1'-sn-glycerol) + 1-hexadecanoyl-sn-glycero-3-phosphocholine = 1-hexadecanoyl-sn-glycero-3-phospho-(1'-sn-glycerol) + 1-hexadecanoyl-2-(9Z,12Z-octadecadienoyl)-sn-glycero-3-phosphocholine. It carries out the reaction 1,2-di-(9Z-octadecenoyl)-sn-glycero-3-phospho-(1'-sn-glycerol) + 1-nonadecanoyl-sn-glycero-3-phosphocholine = 1-nonadecanoyl-2-(9Z-octadecenoyl)-sn-glycero-3-phosphocholine + 1-(9Z-octadecenoyl)-sn-glycero-3-phospho-(1'-sn-glycerol). The catalysed reaction is a 1,2-diacyl-sn-glycero-3-phosphate + a 1-acyl-sn-glycero-3-phosphocholine = a 1-acyl-sn-glycero-3-phosphate + a 1,2-diacyl-sn-glycero-3-phosphocholine. The enzyme catalyses 1-hexadecanoyl-2-(9Z,12Z-octadecadienoyl)-sn-glycero-3-phosphate + 1-hexadecanoyl-sn-glycero-3-phosphocholine = 1-hexadecanoyl-2-(9Z,12Z-octadecadienoyl)-sn-glycero-3-phosphocholine + 1-hexadecanoyl-sn-glycero-3-phosphate. It catalyses the reaction 1-hexadecanoyl-2-(9Z,12Z-octadecadienoyl)-sn-glycero-3-phosphocholine + 1-(9Z-octadecenoyl)-sn-glycero-3-phosphate = 1-(9Z)-octadecenoyl-2-(9Z,12Z)-octadecadienoyl-sn-glycero-3-phosphate + 1-hexadecanoyl-sn-glycero-3-phosphocholine. It carries out the reaction a 1-acyl-sn-glycero-3-phosphocholine + a 1,2-diacyl-sn-glycero-3-phosphoethanolamine = a 1-acyl-sn-glycero-3-phosphoethanolamine + a 1,2-diacyl-sn-glycero-3-phosphocholine. The catalysed reaction is 1-hexadecanoyl-2-(9Z,12Z-octadecadienoyl)-sn-glycero-3-phosphoethanolamine + 1-hexadecanoyl-sn-glycero-3-phosphocholine = 1-hexadecanoyl-2-(9Z,12Z-octadecadienoyl)-sn-glycero-3-phosphocholine + 1-hexadecanoyl-sn-glycero-3-phosphoethanolamine. The enzyme catalyses 1,2-di-(9Z,12Z-octadecadienoyl)-sn-glycero-3-phosphoethanolamine + 1-tetradecanoyl-sn-glycero-3-phosphocholine = 1-(9Z,12Z-octadecadienoyl)-sn-glycero-3-phosphoethanolamine + 1-tetradecanoyl-2-(9Z,12Z-octadecadienoyl)-sn-glycero-3-phosphocholine. It catalyses the reaction 1'-[1,2-diacyl-sn-glycero-3-phospho],3'-[1-acyl-sn-glycero-3-phospho]-glycerol + a 1,2-diacyl-sn-glycero-3-phosphoethanolamine = a cardiolipin + a 1-acyl-sn-glycero-3-phosphoethanolamine. It carries out the reaction 1-hexadecanoyl-2-(9Z,12Z-octadecadienoyl)-sn-glycero-3-phosphoethanolamine + 1'-[1,2-di-(9Z,12Z-octadecadienoyl)-sn-glycero-3-phospho]-3'-[1-(9Z,12Z-octadecadienoyl)-sn-glycero-3-phospho]-glycerol = 1',3'-bis-[1,2-di-(9Z,12Z-octadecadienoyl)-sn-glycero-3-phospho]-glycerol + 1-hexadecanoyl-sn-glycero-3-phosphoethanolamine. The catalysed reaction is 1'-[1-(9Z,12Z-octadecadienoyl)-2-(9Z-octadecenoyl)-sn-glycero-3-phospho]-3'-[1-(9Z,12Z-octadecadienoyl)-sn-glycero-3-phospho]-glycerol + 1',3'-bis-[1,2-di-(9Z,12Z-octadecadienoyl)-sn-glycero-3-phospho]-glycerol = 1'-[1,2-di-(9Z,12Z-octadecadienoyl)-sn-glycero-3-phospho]-3'-[1-(9Z,12Z-octadecadienoyl)-2-(9Z-octadecenoyl)-sn-glycero-3-phospho]-glycerol + 1'-[1,2-di-(9Z,12Z-octadecadienoyl)-sn-glycero-3-phospho]-3'-[1-(9Z,12Z-octadecadienoyl)-sn-glycero-3-phospho]-glycerol. The enzyme catalyses 1,2-di-(9Z-hexadecenoyl)-sn-glycero-3-phosphocholine + 1-hexadecanoyl-sn-glycero-3-phosphocholine = 1-hexadecanoyl-2-(9Z-hexadecenoyl)-sn-glycero-3-phosphocholine + 1-(9Z-hexadecenoyl)-sn-glycero-3-phosphocholine. It catalyses the reaction 1,2-dioctadecanoyl-sn-glycero-3-phosphocholine + 1-hexadecanoyl-sn-glycero-3-phosphocholine = 1-hexadecanoyl-2-octadecanoyl-sn-glycero-3-phosphocholine + 1-octadecanoyl-sn-glycero-3-phosphocholine. It carries out the reaction 1,2-di-(9Z-octadecenoyl)-sn-glycero-3-phosphocholine + 1-hexadecanoyl-sn-glycero-3-phosphocholine = 1-hexadecanoyl-2-(9Z-octadecenoyl)-sn-glycero-3-phosphocholine + 1-(9Z-octadecenoyl)-sn-glycero-3-phosphocholine. The catalysed reaction is 1,2-di-(9Z,12Z-octadecadienoyl)-sn-glycero-3-phosphocholine + 1-(9Z-octadecenoyl)-sn-glycero-3-phosphocholine = 1-(9Z)-octadecenoyl-2-(9Z,12Z)-octadecadienoyl-sn-glycero-3-phosphocholine + 1-(9Z,12Z)-octadecadienoyl-sn-glycero-3-phosphocholine. The enzyme catalyses 1,2-di-(9Z,12Z,15Z-octadecatrienoyl)-sn-glycero-3-phosphocholine + 1-tetradecanoyl-sn-glycero-3-phosphocholine = 1-tetradecanoyl-2-(9Z,12Z,15Z-octadecatrienoyl)-sn-glycero-3-phosphocholine + 1-(9Z,12Z,15Z-octadecatrienoyl)-sn-glycero-3-phosphocholine. It catalyses the reaction 1-nonadecanoyl-sn-glycero-3-phosphocholine + 1-octadecanoyl-2-(9Z-octadecenoyl)-sn-glycero-3-phosphocholine = 1-nonadecanoyl-2-(9Z-octadecenoyl)-sn-glycero-3-phosphocholine + 1-octadecanoyl-sn-glycero-3-phosphocholine. It carries out the reaction 1-(9Z)-octadecenoyl-2-octadecanoyl-sn-glycero-3-phosphocholine + 1-nonadecanoyl-sn-glycero-3-phosphocholine = 2-octadecanoyl-sn-glycero-3-phosphocholine + 1-nonadecanoyl-2-(9Z-octadecenoyl)-sn-glycero-3-phosphocholine. Its pathway is phospholipid metabolism. Functionally, acyltransferase required to remodel newly synthesized phospholipid cardiolipin (1',3'-bis-[1,2-diacyl-sn-glycero-3-phospho]-glycerol or CL), a key component of the mitochondrial inner membrane, with tissue specific acyl chains necessary for adequate mitochondrial function. Its role in cellular physiology is to improve mitochondrial performance. CL is critical for the coassembly of lipids and proteins in mitochondrial membranes. For instance, remodeling of the acyl groups of CL in the mitochondrial inner membrane affects the assembly and stability of respiratory chain complex IV and its supercomplex forms. Catalyzes the transacylation between phospholipids and lysophospholipids, with the highest rate being between phosphatidylcholine (1,2-diacyl-sn-glycero-3-phosphocholine or PC) and CL. Catalyzes both 1-acyl-sn-glycero-3-phosphocholine (lysophosphatidylcholine or LPC) reacylation and PC-CL transacylation, that means, it exchanges acyl groups between CL and PC by a combination of forward and reverse transacylations. Also catalyzes transacylations between other phospholipids such as phosphatidylethanolamine (1,2-diacyl-sn-glycero-3-phosphoethanolamine or PE) and CL, between PC and PE, and between PC and phosphatidate (1,2-diacyl-sn-glycero-3-phosphate or PA), although at lower rate. Not regiospecific, it transfers acyl groups into any of the sn-1 and sn-2 positions of the monolysocardiolipin (MLCL), which is an important prerequisite for uniformity and symmetry in CL acyl distribution. Cannot transacylate dilysocardiolipin (DLCL), thus, the role of MLCL is limited to that of an acyl acceptor. CoA-independent, it can reshuffle molecular species within a single phospholipid class. Redistributes fatty acids between MLCL, CL, and other lipids, which prolongs the half-life of CL. Its action is completely reversible, which allows for cyclic changes, such as fission and fusion or bending and flattening of the membrane. Hence, by contributing to the flexibility of the lipid composition, it plays an important role in the dynamics of mitochondria membranes. Essential for the final stage of spermatogenesis, spermatid individualization. Required for the initiation of mitophagy. The polypeptide is Tafazzin (Drosophila melanogaster (Fruit fly)).